We begin with the raw amino-acid sequence, 404 residues long: tRNA/tmRNA (uracil-C(5))-methyltransferase (404 aa).

S-adenosyl-L-methionine-binding residues include Gln218, Tyr251, Asn256, Glu272, and Asp332. Residue Cys358 is the Nucleophile of the active site. Glu392 acts as the Proton acceptor in catalysis.

It belongs to the class I-like SAM-binding methyltransferase superfamily. RNA M5U methyltransferase family. TrmA subfamily.

It catalyses the reaction uridine(54) in tRNA + S-adenosyl-L-methionine = 5-methyluridine(54) in tRNA + S-adenosyl-L-homocysteine + H(+). The catalysed reaction is uridine(341) in tmRNA + S-adenosyl-L-methionine = 5-methyluridine(341) in tmRNA + S-adenosyl-L-homocysteine + H(+). In terms of biological role, dual-specificity methyltransferase that catalyzes the formation of 5-methyluridine at position 54 (m5U54) in all tRNAs, and that of position 341 (m5U341) in tmRNA (transfer-mRNA). This Helicobacter hepaticus (strain ATCC 51449 / 3B1) protein is tRNA/tmRNA (uracil-C(5))-methyltransferase.